The primary structure comprises 138 residues: Transcription antitermination protein NusB (138 aa).

It belongs to the NusB family.

In terms of biological role, involved in transcription antitermination. Required for transcription of ribosomal RNA (rRNA) genes. Binds specifically to the boxA antiterminator sequence of the ribosomal RNA (rrn) operons. The protein is Transcription antitermination protein NusB of Leptospira borgpetersenii serovar Hardjo-bovis (strain JB197).